A 185-amino-acid chain; its full sequence is UPF0301 protein Csal_0058 (185 aa).

This sequence belongs to the UPF0301 (AlgH) family.

The sequence is that of UPF0301 protein Csal_0058 from Chromohalobacter salexigens (strain ATCC BAA-138 / DSM 3043 / CIP 106854 / NCIMB 13768 / 1H11).